The following is a 238-amino-acid chain: Fatty acid metabolism regulator protein (238 aa).

Residues K6–F74 form the HTH gntR-type domain. Residues E34 to Q53 constitute a DNA-binding region (H-T-H motif).

In terms of assembly, homodimer.

The protein resides in the cytoplasm. Functionally, multifunctional regulator of fatty acid metabolism. This chain is Fatty acid metabolism regulator protein, found in Shewanella baltica (strain OS223).